The chain runs to 330 residues: Ketol-acid reductoisomerase (NADP(+)) (330 aa).

Positions 3–184 constitute a KARI N-terminal Rossmann domain; it reads LPVYYDKDID…GGGRMGVLET (182 aa). NADP(+) is bound by residues 26-29, Ser52, and Ser54; that span reads YGVQ. His109 is an active-site residue. Residue Gly135 participates in NADP(+) binding. One can recognise a KARI C-terminal knotted domain in the interval 185-329; the sequence is SFKEECESDL…EILRAPFNHK (145 aa). Mg(2+)-binding residues include Asp193, Glu197, Glu229, and Glu233. Ser254 is a substrate binding site.

It belongs to the ketol-acid reductoisomerase family. Mg(2+) serves as cofactor.

The enzyme catalyses (2R)-2,3-dihydroxy-3-methylbutanoate + NADP(+) = (2S)-2-acetolactate + NADPH + H(+). The catalysed reaction is (2R,3R)-2,3-dihydroxy-3-methylpentanoate + NADP(+) = (S)-2-ethyl-2-hydroxy-3-oxobutanoate + NADPH + H(+). The protein operates within amino-acid biosynthesis; L-isoleucine biosynthesis; L-isoleucine from 2-oxobutanoate: step 2/4. It participates in amino-acid biosynthesis; L-valine biosynthesis; L-valine from pyruvate: step 2/4. Involved in the biosynthesis of branched-chain amino acids (BCAA). Catalyzes an alkyl-migration followed by a ketol-acid reduction of (S)-2-acetolactate (S2AL) to yield (R)-2,3-dihydroxy-isovalerate. In the isomerase reaction, S2AL is rearranged via a Mg-dependent methyl migration to produce 3-hydroxy-3-methyl-2-ketobutyrate (HMKB). In the reductase reaction, this 2-ketoacid undergoes a metal-dependent reduction by NADPH to yield (R)-2,3-dihydroxy-isovalerate. In Helicobacter pylori (strain J99 / ATCC 700824) (Campylobacter pylori J99), this protein is Ketol-acid reductoisomerase (NADP(+)).